Reading from the N-terminus, the 570-residue chain is Ribosome-inactivating protein SNAI (570 aa).

The first 28 residues, 1 to 28 (MRLVAKLLYLAVLAICGLGIHGALTHPR), serve as a signal peptide directing secretion. Residues Asn-40, Asn-62, and Asn-144 are each glycosylated (N-linked (GlcNAc...) asparagine). Glu-199 is an active-site residue. An N-linked (GlcNAc...) asparagine glycan is attached at Asn-260. 3 disulfide bridges follow: Cys-284/Cys-316, Cys-332/Cys-351, and Cys-373/Cys-385. Ricin B-type lectin domains follow at residues 319–439 (VEVT…WTVG) and 441–566 (VEPL…WITT). Residues 329-369 (DGLCVDVRYGHYIDGNPVQLRPCGNECNQLWTFRTDGTIRW) form a 1-alpha repeat. The stretch at 370–405 (LGKCLTASSSVMIYDCNTVPPEATKWVVSIDGTITN) is one 1-beta repeat. One copy of the 1-gamma repeat lies at 408-440 (SGLVLTAPQAAEGTALSLENNIHAARQGWTVGD). One copy of the 2-alpha repeat lies at 452–489 (KQMCLRENGENNFVWLEDCVLNRVQQEWALYGDGTIRV). Cys-455 and Cys-470 are oxidised to a cystine. Residue Asn-492 is glycosylated (N-linked (GlcNAc...) asparagine). A 2-beta repeat occupies 493–531 (RSLCVTSEDHEPSDLIVILKCEGSGNQRWVFNTNGTISN). A disulfide bond links Cys-496 and Cys-513. Asn-526 is a glycosylation site (N-linked (GlcNAc...) asparagine). Residues 534–567 (AKLLMDVAQRDVSLRKIILYRPTGNPNQQWITTT) form a 2-gamma repeat.

It belongs to the ribosome-inactivating protein family. Type 2 RIP subfamily. Tetramer of four pairs of disulfide bound A-B chains. The precursor is processed in two chains, A and B, that are linked by a disulfide bond. A small truncated form corresponding roughly to the second ricin B-type lectin domain of the B chain, TrSNAI, can also be produced. Post-translationally, glycosylated. N-glycans of subunit A are (Man)2-3(Xyl)(GlcNAc)2(Fuc) at Asn-40, (GlcNAc)0-2(Man)3(Xyl)(GlcNAc)2(Fuc) or (Man)1-2(GlcNAc)2 at Asn-62, (Man)3(Xyl)(GlcNAc)2(Fuc)0-1 at Asn-144 and (GlcNAc)0-1(Man)3(Xyl)(GlcNAc)2(Fuc) at Asn-260. N-glycans of subunit B are (Man)3(Xyl)(GlcNAc)2(Fuc) at Asn-492 and (Man)6-9(GlcNAc)2 at Asn-526. In terms of tissue distribution, expressed in bark.

It carries out the reaction Endohydrolysis of the N-glycosidic bond at one specific adenosine on the 28S rRNA.. In terms of biological role, neu5Ac(alpha2-6)Gal/GalNAc specific agglutinin. Behaves as a type-2 ribosome-inactivating protein. Strongly inhibits mammalian but not plant ribosomes. The A chain is responsible for inhibiting protein synthesis through the catalytic inactivation of 60S ribosomal subunits by removing adenine from position 4,324 of 28S rRNA. The B chain binds to cell receptors and probably facilitates the entry into the cell of the A chain; B chains are also responsible for cell agglutination (lectin activity). Involved in plant defense against insects. Binds Neu5Ac(alpha2-6)Gal/GalNAc but has no clear agglutination activity. This is Ribosome-inactivating protein SNAI from Sambucus nigra (European elder).